Here is a 513-residue protein sequence, read N- to C-terminus: Ankyrin repeat domain-containing protein 13C-B (513 aa).

Residues 1–19 (MTGEKIRSLHRDQKPSKDE) are compositionally biased toward basic and acidic residues. Disordered regions lie at residues 1–34 (MTGEKIRSLHRDQKPSKDEDLLEPDEEATADGTF) and 55–77 (PSNPALLQNHHHHHQQQISPMTP). Positions 20–29 (DLLEPDEEAT) are enriched in acidic residues. 3 ANK repeats span residues 83 to 114 (DVYFPVHECVIKGDIRKLSSLIRSHNIGQKDN), 115 to 144 (HGNTPLHLAVMLGNKECAHLLLAHNAPVKV), and 148 to 177 (QGWSPLAEAISYGDRQMITALLRKLKQQSR).

It is found in the endoplasmic reticulum membrane. In terms of biological role, acts as a molecular chaperone for G protein-coupled receptors, regulating their biogenesis and exit from the ER. The protein is Ankyrin repeat domain-containing protein 13C-B (ankrd13c-b) of Xenopus laevis (African clawed frog).